We begin with the raw amino-acid sequence, 180 residues long: Large ribosomal subunit protein uL6 (180 aa).

Belongs to the universal ribosomal protein uL6 family. Part of the 50S ribosomal subunit.

This protein binds to the 23S rRNA, and is important in its secondary structure. It is located near the subunit interface in the base of the L7/L12 stalk, and near the tRNA binding site of the peptidyltransferase center. The sequence is that of Large ribosomal subunit protein uL6 from Borrelia duttonii (strain Ly).